Here is a 337-residue protein sequence, read N- to C-terminus: Large ribosomal subunit protein uL3 (337 aa).

Belongs to the universal ribosomal protein uL3 family. In terms of assembly, part of the 50S ribosomal subunit. Forms a cluster with proteins L14 and L24e.

In terms of biological role, one of the primary rRNA binding proteins, it binds directly near the 3'-end of the 23S rRNA, where it nucleates assembly of the 50S subunit. The sequence is that of Large ribosomal subunit protein uL3 from Methanosphaerula palustris (strain ATCC BAA-1556 / DSM 19958 / E1-9c).